The sequence spans 332 residues: HTH-type transcriptional regulator RegA (332 aa).

One can recognise an HTH lacI-type domain in the interval 1–57 (MATSIKDVAREAGVSIATVSRVLNDIDVVNEDTKKKVLDAIKELGYRPNIVARSLKT). Residues 5-24 (IKDVAREAGVSIATVSRVLN) constitute a DNA-binding region (H-T-H motif).

In terms of biological role, involved in the regulation of amylase production. In Clostridium saccharobutylicum, this protein is HTH-type transcriptional regulator RegA (regA).